We begin with the raw amino-acid sequence, 461 residues long: Tol-Pal system protein TolB 2 (461 aa).

The first 20 residues, 1-20 (MKIRHLLLLAGLVSAPAIVA), serve as a signal peptide directing secretion. The interval 28–47 (SSSAAQASGDDDGGLTGSVS) is disordered.

This sequence belongs to the TolB family. The Tol-Pal system is composed of five core proteins: the inner membrane proteins TolA, TolQ and TolR, the periplasmic protein TolB and the outer membrane protein Pal. They form a network linking the inner and outer membranes and the peptidoglycan layer.

Its subcellular location is the periplasm. In terms of biological role, part of the Tol-Pal system, which plays a role in outer membrane invagination during cell division and is important for maintaining outer membrane integrity. This Novosphingobium aromaticivorans (strain ATCC 700278 / DSM 12444 / CCUG 56034 / CIP 105152 / NBRC 16084 / F199) protein is Tol-Pal system protein TolB 2.